Here is a 1120-residue protein sequence, read N- to C-terminus: Topless-related protein 1 (1120 aa).

In terms of domain architecture, LisH spans 4–36; it reads LSRELVFLILQFLDEEKFKETVHKLEQESGFFF. Positions 34–92 constitute a CTLH domain; the sequence is FFFNMKYFEDEVHNGNWDEVEKYLSGFTKVDDNRYSMKIFFEIRKQKYLEALDRHDRPK. 2 disordered regions span residues 210–235 and 283–307; these read ARAPSPVNNPLLGSLPKAEGFPPLGA and HPRTPPSNSAVDYPSGDSDHVSKRT. Residue serine 214 is modified to Phosphoserine. WD repeat units lie at residues 353–393, 415–454, 460–501, 504–545, 548–591, 595–634, 639–678, 699–745, 755–794, 822–860, 863–903, 906–945, 999–1038, and 1052–1091; these read SQGS…RLVQ, EPVVSVNRVIWSPDGSLFGVAYSRHIVQLYSYHGGEDMRQ, AHVG…KRYT, GHEA…SRVD, APGR…VKRT, FHKRSLGVVQFDTTKNRYLAAGDDFSIKFWDMDTIQLLTA, GGLQASPRIRFNKEGSLLAVSANDNMIKVMANSDGLRLLH, ERPA…EPSQ, MRVTKISRLIFTNSGNAILALASNAIHLLWKWQRNDRNAT, NPEEAVPCFALSKNDSYVMSASGGKISLFNMMTFKTMAT, PPPP…VKSK, GHSKRITGLAFSNVLNVLVSSGADAQLCVWNTDGWEKQKS, ESAAPITHATFSCDSQLIYTSFMDATICVFSSANLRLRCR, and SNVHPLVIAAHPQESNMFAVGLSDGGVHIFEPLESEGKWG. Residues 1087 to 1120 form a disordered region; sequence EGKWGVAPPPENGSASAVTATPSVGASASDQPQR. A compositionally biased stretch (polar residues) spans 1099–1120; sequence GSASAVTATPSVGASASDQPQR.

As to quaternary structure, tetramer. Interacts with SNC1 (via TIR domain) and HDA19. Interacts with SPL (via EAR motif). Interacts with SPEAR3/TIE1. Binds to and corepresses GAF1/IDD2. Highly expressed in stamen primordium, microsporocyte, ovule primordium and megasporocyte during sporogenesis.

It localises to the nucleus. Its function is as follows. Transcriptional corepressor. Activates TIR-NB-LRR R protein-mediated immune responses through repression of negative regulators such as CNGC2/DND1. Negative regulator of jasmonate responses. The sequence is that of Topless-related protein 1 (TPR1) from Arabidopsis thaliana (Mouse-ear cress).